A 479-amino-acid polypeptide reads, in one-letter code: Ribosomal RNA small subunit methyltransferase F (479 aa).

S-adenosyl-L-methionine-binding positions include 125–131 (AAAPGSK), E149, D176, and D194. The active-site Nucleophile is the C247.

It belongs to the class I-like SAM-binding methyltransferase superfamily. RsmB/NOP family.

The protein localises to the cytoplasm. It catalyses the reaction cytidine(1407) in 16S rRNA + S-adenosyl-L-methionine = 5-methylcytidine(1407) in 16S rRNA + S-adenosyl-L-homocysteine + H(+). Functionally, specifically methylates the cytosine at position 1407 (m5C1407) of 16S rRNA. The sequence is that of Ribosomal RNA small subunit methyltransferase F from Salmonella schwarzengrund (strain CVM19633).